The chain runs to 4518 residues: Dynein axonemal heavy chain 11 (4518 aa).

Positions 1-1857 (MAASVAAQEA…LVHICDAQFQ (1857 aa)) are stem. AAA stretches follow at residues 1858–2079 (YFYE…VLVV), 2139–2368 (QMVR…TSFK), 2474–2721 (TMDP…VFQG), and 2819–3068 (NYND…EGRH). Residues 1896-1903 (GPAGTGKT), 2177-2184 (GNAGTGKS), 2512-2519 (GNAGVGKT), and 2857-2864 (GVGGSGKQ) contribute to the ATP site. The tract at residues 3074–3405 (KSFLEQISLF…GQSIKSFEAQ (332 aa)) is stalk. A coiled-coil region spans residues 3322-3391 (LAQANLELAT…NRLVKELEVK (70 aa)). AAA regions lie at residues 3461–3688 (LTDD…EIER) and 3898–4124 (LRNF…VLYN).

Belongs to the dynein heavy chain family. As to quaternary structure, consists of at least two heavy chains and a number of intermediate and light chains. Interacts with CFAP45.

It is found in the cytoplasm. It localises to the cytoskeleton. The protein localises to the cilium axoneme. Functionally, force generating protein of respiratory cilia. Produces force towards the minus ends of microtubules. Dynein has ATPase activity; the force-producing power stroke is thought to occur on release of ADP. This chain is Dynein axonemal heavy chain 11 (DNAH11), found in Sus scrofa (Pig).